The primary structure comprises 399 residues: Elongation factor Tu (399 aa).

The 195-residue stretch at 10–204 folds into the tr-type G domain; sequence KPHVNIGTIG…AVDASIPEPE (195 aa). Positions 19–26 are G1; the sequence is GHVDHGKT. 19 to 26 serves as a coordination point for GTP; that stretch reads GHVDHGKT. T26 contributes to the Mg(2+) binding site. The interval 60–64 is G2; sequence GITIN. Residues 81-84 are G3; sequence DCPG. GTP is bound by residues 81–85 and 136–139; these read DCPGH and NKCD. Positions 136-139 are G4; sequence NKCD. The interval 174–176 is G5; sequence SGL.

This sequence belongs to the TRAFAC class translation factor GTPase superfamily. Classic translation factor GTPase family. EF-Tu/EF-1A subfamily. As to quaternary structure, monomer.

The protein resides in the cytoplasm. The enzyme catalyses GTP + H2O = GDP + phosphate + H(+). Functionally, GTP hydrolase that promotes the GTP-dependent binding of aminoacyl-tRNA to the A-site of ribosomes during protein biosynthesis. In Prochlorococcus marinus (strain MIT 9312), this protein is Elongation factor Tu.